An 83-amino-acid chain; its full sequence is Pigment-dispersing hormone peptides (83 aa).

The N-terminal stretch at 1-24 (MRFIILGVLFIAVASMILSNGVMA) is a signal peptide. Position 80 is an alanine amide (alanine 80).

It belongs to the arthropod PDH family. In terms of tissue distribution, strongly expressed in eyestalk tissue and cerebral ganglia (at protein level).

The protein localises to the secreted. Its function is as follows. The pigment-dispersing hormone causes the migration of the distal retinal pigment into the proximal end of the pigment chromatophore cells and thus decreases the amount of light entering the retinulas. May also function as a neurotransmitter and/or neuromodulator. This Eurydice pulchra (Speckled sea louse) protein is Pigment-dispersing hormone peptides.